We begin with the raw amino-acid sequence, 166 residues long: MTQGRQKDELKDITLLGNQNNTYEFDYRPEVLETFDNKHQGRDYFVKFNCPEFTSLCPITGQPDFATIYISYIPNIKMVESKSLKLYLFSFRNHGDFHEDCMNIIMNDLINLMDPHYIEVWGKFTPRGGISIDPYTNYGRPDTKYEKMAEHRLMNHDMYPEKIDNR.

Catalysis depends on cysteine 57, which acts as the Thioimide intermediate. Catalysis depends on aspartate 64, which acts as the Proton donor. Substrate-binding positions include 79 to 81 and 98 to 99; these read VES and HE.

Belongs to the GTP cyclohydrolase I family. QueF type 1 subfamily.

It localises to the cytoplasm. It catalyses the reaction 7-aminomethyl-7-carbaguanine + 2 NADP(+) = 7-cyano-7-deazaguanine + 2 NADPH + 3 H(+). The protein operates within tRNA modification; tRNA-queuosine biosynthesis. Functionally, catalyzes the NADPH-dependent reduction of 7-cyano-7-deazaguanine (preQ0) to 7-aminomethyl-7-deazaguanine (preQ1). The polypeptide is NADPH-dependent 7-cyano-7-deazaguanine reductase (Staphylococcus epidermidis (strain ATCC 35984 / DSM 28319 / BCRC 17069 / CCUG 31568 / BM 3577 / RP62A)).